The chain runs to 376 residues: N-acetyldiaminopimelate deacetylase (376 aa).

The active site involves Asp69. Glu128 acts as the Proton acceptor in catalysis.

It belongs to the peptidase M20A family. N-acetyldiaminopimelate deacetylase subfamily.

It catalyses the reaction N-acetyl-(2S,6S)-2,6-diaminopimelate + H2O = (2S,6S)-2,6-diaminopimelate + acetate. Its pathway is amino-acid biosynthesis; L-lysine biosynthesis via DAP pathway; LL-2,6-diaminopimelate from (S)-tetrahydrodipicolinate (acetylase route): step 3/3. In terms of biological role, catalyzes the conversion of N-acetyl-diaminopimelate to diaminopimelate and acetate. The chain is N-acetyldiaminopimelate deacetylase from Bacillus cytotoxicus (strain DSM 22905 / CIP 110041 / 391-98 / NVH 391-98).